Reading from the N-terminus, the 297-residue chain is Mitochondrial glycine transporter (297 aa).

3 Solcar repeats span residues 5-81 (TGHL…MRTA), 105-189 (LSMY…LKHT), and 211-295 (TSTA…LIKH). Transmembrane regions (helical) follow at residues 8–33 (LIGG…TRFQ), 56–82 (GTLP…RTAL), 111–136 (LVTG…VRYE), 164–187 (GFGP…EKLK), 215–241 (INST…KTRM), and 270–288 (GLSM…AWGI).

It belongs to the mitochondrial carrier (TC 2.A.29) family. SLC25A38 subfamily.

The protein resides in the mitochondrion inner membrane. The enzyme catalyses glycine(in) = glycine(out). Functionally, mitochondrial glycine transporter that imports glycine into the mitochondrial matrix. Plays an important role in providing glycine for the first enzymatic step in heme biosynthesis, the condensation of glycine with succinyl-CoA to produce 5-aminolevulinate (ALA) in the mitochondrial matrix. The polypeptide is Mitochondrial glycine transporter (Candida glabrata (strain ATCC 2001 / BCRC 20586 / JCM 3761 / NBRC 0622 / NRRL Y-65 / CBS 138) (Yeast)).